A 340-amino-acid polypeptide reads, in one-letter code: Ketol-acid reductoisomerase (NADP(+)) (340 aa).

The 183-residue stretch at 1 to 183 folds into the KARI N-terminal Rossmann domain; sequence MAITVYYDKD…GGGRTGIIET (183 aa). NADP(+) contacts are provided by residues 26-29, arginine 49, serine 52, serine 54, and 84-87; these read FGSQ and DEIQ. The active site involves histidine 109. Position 135 (glycine 135) interacts with NADP(+). The 146-residue stretch at 184–329 folds into the KARI C-terminal knotted domain; that stretch reads TFKAETETDL…RNLRAMMPWI (146 aa). Mg(2+) contacts are provided by aspartate 192, glutamate 196, glutamate 228, and glutamate 232. Residue serine 253 coordinates substrate.

The protein belongs to the ketol-acid reductoisomerase family. It depends on Mg(2+) as a cofactor.

It carries out the reaction (2R)-2,3-dihydroxy-3-methylbutanoate + NADP(+) = (2S)-2-acetolactate + NADPH + H(+). The enzyme catalyses (2R,3R)-2,3-dihydroxy-3-methylpentanoate + NADP(+) = (S)-2-ethyl-2-hydroxy-3-oxobutanoate + NADPH + H(+). Its pathway is amino-acid biosynthesis; L-isoleucine biosynthesis; L-isoleucine from 2-oxobutanoate: step 2/4. The protein operates within amino-acid biosynthesis; L-valine biosynthesis; L-valine from pyruvate: step 2/4. Involved in the biosynthesis of branched-chain amino acids (BCAA). Catalyzes an alkyl-migration followed by a ketol-acid reduction of (S)-2-acetolactate (S2AL) to yield (R)-2,3-dihydroxy-isovalerate. In the isomerase reaction, S2AL is rearranged via a Mg-dependent methyl migration to produce 3-hydroxy-3-methyl-2-ketobutyrate (HMKB). In the reductase reaction, this 2-ketoacid undergoes a metal-dependent reduction by NADPH to yield (R)-2,3-dihydroxy-isovalerate. The polypeptide is Ketol-acid reductoisomerase (NADP(+)) (Campylobacter jejuni subsp. jejuni serotype O:23/36 (strain 81-176)).